Consider the following 692-residue polypeptide: Methionine--tRNA ligase (692 aa).

Residues 26–36 (PYANGSIHLGH) carry the 'HIGH' region motif. Cys157, Cys160, Cys170, and Cys173 together coordinate Zn(2+). Positions 342–346 (KMSKS) match the 'KMSKS' region motif. Residue Lys345 coordinates ATP. Positions 590–692 (DFAKVDLRIA…SGAQPGMRVK (103 aa)) constitute a tRNA-binding domain.

It belongs to the class-I aminoacyl-tRNA synthetase family. MetG type 1 subfamily. Homodimer. Requires Zn(2+) as cofactor.

It is found in the cytoplasm. It carries out the reaction tRNA(Met) + L-methionine + ATP = L-methionyl-tRNA(Met) + AMP + diphosphate. Is required not only for elongation of protein synthesis but also for the initiation of all mRNA translation through initiator tRNA(fMet) aminoacylation. This chain is Methionine--tRNA ligase, found in Methylobacillus flagellatus (strain ATCC 51484 / DSM 6875 / VKM B-1610 / KT).